The following is a 151-amino-acid chain: Transcription factor ATOH7 (151 aa).

Residues 39–91 (KRRLAANARERRRMQGLNTAFDRLRKVVPQWGQDKKLSKYETLQMALSYIMAL) enclose the bHLH domain.

Its subcellular location is the nucleus. It localises to the perikaryon. The protein localises to the cell projection. It is found in the axon. In terms of biological role, transcription factor that binds to DNA at the consensus sequence 5'-CAG[GC]TG-3'. Positively regulates the determination of retinal ganglion cell fate and formation of the optic nerve and retino-hypothalamic tract. Required for retinal circadian rhythm photoentrainment. Plays a role in brainstem auditory signaling and binaural processing. During retinal neurogenesis, activates its own transcription, as well as the transcription of CHRNB3 and BRN3. This is Transcription factor ATOH7 from Gallus gallus (Chicken).